Consider the following 568-residue polypeptide: Vitamin H transporter 1 (568 aa).

The next 12 helical transmembrane spans lie at 85 to 105 (IIPC…TVSL), 123 to 143 (GYSA…YIIF), 158 to 178 (IWVS…AVLG), 187 to 207 (YVAL…GLAY), 222 to 242 (IGWY…VSAG), 257 to 277 (WMFL…PWWL), 345 to 365 (VWPF…IFNY), 384 to 404 (LLNA…MPLY), 411 to 431 (FSFF…ANYA), 439 to 459 (GGLL…MAWC), 470 to 490 (VGVA…SVVT), and 508 to 528 (NDVC…EFLL). The disordered stretch occupies residues 547–568 (VEDEQEMTDIKPALPSSQQADA).

It belongs to the major facilitator superfamily. Allantoate permease family.

It is found in the membrane. Functionally, involved in uptake of biotin and desthiobiotin with the concomitant entry of protons. The sequence is that of Vitamin H transporter 1 (vht1) from Schizosaccharomyces pombe (strain 972 / ATCC 24843) (Fission yeast).